The sequence spans 246 residues: Transmembrane protein 41 homolog (246 aa).

The next 6 helical transmembrane spans lie at 12–32 (WLVLLIFATFAVSIFAVYSNF), 68–88 (SVVLCGVIVVYVFLQSFAIPG), 101–123 (PFYVAIVLVCSCSATGAAICYTI), 159–179 (IFLRVTPIVPNWLINIASPVL), 182–202 (PLAPFFWGTFLGVAPPSFLYI), and 219–239 (SWSSIVLLTGSAILSLAPILL).

The protein belongs to the TMEM41 family.

It localises to the membrane. The protein is Transmembrane protein 41 homolog (tag-175) of Caenorhabditis elegans.